Consider the following 139-residue polypeptide: Nucleoside diphosphate kinase (139 aa).

ATP contacts are provided by lysine 10, phenylalanine 58, arginine 86, threonine 92, arginine 103, and asparagine 113. Catalysis depends on histidine 116, which acts as the Pros-phosphohistidine intermediate.

The protein belongs to the NDK family. Homotetramer. Requires Mg(2+) as cofactor.

The protein resides in the cytoplasm. The enzyme catalyses a 2'-deoxyribonucleoside 5'-diphosphate + ATP = a 2'-deoxyribonucleoside 5'-triphosphate + ADP. The catalysed reaction is a ribonucleoside 5'-diphosphate + ATP = a ribonucleoside 5'-triphosphate + ADP. In terms of biological role, major role in the synthesis of nucleoside triphosphates other than ATP. The ATP gamma phosphate is transferred to the NDP beta phosphate via a ping-pong mechanism, using a phosphorylated active-site intermediate. The chain is Nucleoside diphosphate kinase from Desulfovibrio desulfuricans (strain ATCC 27774 / DSM 6949 / MB).